A 314-amino-acid chain; its full sequence is tRNA dimethylallyltransferase 1 (314 aa).

Residue 17 to 24 (GPTAAGKT) coordinates ATP. 19–24 (TAAGKT) provides a ligand contact to substrate. The segment at 42–45 (DSRQ) is interaction with substrate tRNA.

The protein belongs to the IPP transferase family. Monomer. The cofactor is Mg(2+).

The catalysed reaction is adenosine(37) in tRNA + dimethylallyl diphosphate = N(6)-dimethylallyladenosine(37) in tRNA + diphosphate. In terms of biological role, catalyzes the transfer of a dimethylallyl group onto the adenine at position 37 in tRNAs that read codons beginning with uridine, leading to the formation of N6-(dimethylallyl)adenosine (i(6)A). The sequence is that of tRNA dimethylallyltransferase 1 from Syntrophotalea carbinolica (strain DSM 2380 / NBRC 103641 / GraBd1) (Pelobacter carbinolicus).